The chain runs to 63 residues: ComG operon repressor (63 aa).

Negatively regulates the transcription of the comG operon. The polypeptide is ComG operon repressor (comZ) (Bacillus subtilis (strain 168)).